A 555-amino-acid polypeptide reads, in one-letter code: Putative polyketide hydroxylase (555 aa).

Residues 16 to 45 and 303 to 313 each bind FAD; these read PVLV…LVER and YRAGRVFLAGD. The segment at 366–395 is disordered; the sequence is ATTARAAARSAEHSHPGFAPPPGTSGGPQG.

This sequence belongs to the PheA/TfdB FAD monooxygenase family. It depends on FAD as a cofactor.

In terms of biological role, involved in developmentally regulated synthesis of a compound biosynthetically related to polyketide antibiotics which is essential for spore color in Streptomyces halstedii. This chain is Putative polyketide hydroxylase (schC), found in Streptomyces halstedii.